We begin with the raw amino-acid sequence, 305 residues long: Serine/threonine-protein phosphatase PP-X homolog 3 (305 aa).

Residues Asp-53, His-55, Asp-81, and Asn-113 each contribute to the Mn(2+) site. Catalysis depends on His-114, which acts as the Proton donor. Mn(2+)-binding residues include His-163 and His-237.

The protein belongs to the PPP phosphatase family. PP-4 (PP-X) subfamily. Mn(2+) is required as a cofactor.

It catalyses the reaction O-phospho-L-seryl-[protein] + H2O = L-seryl-[protein] + phosphate. It carries out the reaction O-phospho-L-threonyl-[protein] + H2O = L-threonyl-[protein] + phosphate. In Paramecium tetraurelia, this protein is Serine/threonine-protein phosphatase PP-X homolog 3 (Ppx3).